Consider the following 524-residue polypeptide: Sterol O-acyltransferase 2 (524 aa).

Residues 1-31 (MEPKAPQLRRRERQGEEQENGACGEGNTRTH) are disordered. The Cytoplasmic portion of the chain corresponds to 1–118 (MEPKAPQLRR…LDELMGVQHF (118 aa)). His117 is a cholesterol binding site. Residues 119-140 (RTIYHMFIAGLCVLIISTLAID) traverse the membrane as a helical segment. Over 141–160 (FIDEGRLMLEFDLLLFSFGQ) the chain is Lumenal. Residues 161-186 (LPLALMMWVPMFLSTLLLPYQTLRLW) traverse the membrane as a helical segment. Residues 187-198 (ARPRSGGAWTLG) are Cytoplasmic-facing. Residues 199–222 (ASLGCVLLAAHAAVLCVLPVHVSV) traverse the membrane as a helical segment. Over 223 to 230 (KHELPPAS) the chain is Lumenal. A helical membrane pass occupies residues 231–254 (RCVLVFEQVRFLMKSYSFLRETVP). Topologically, residues 255-295 (GIFCVRGGKGICTPSFSSYLYFLFCPTLIYRETYPRTPSIR) are cytoplasmic. A Cysteine sulfenic acid (-SOH); alternate modification is found at Cys279. Residue Cys279 forms a Glycyl cysteine thioester (Cys-Gly) (interchain with G-Cter in ubiquitin); alternate linkage. A helical membrane pass occupies residues 296-328 (WNYVAKNFAQALGCLLYACFILGRLCVPVFANM). At 329–345 (SREPFSTRALLLSILHA) the chain is on the lumenal side. The helical transmembrane segment at 346–371 (TGPGIFMLLLIFFAFLHCWLNAFAEM) threads the bilayer. The Cytoplasmic segment spans residues 372-419 (LRFGDRMFYRDWWNSTSFSNYYRTWNVVVHDWLYSYVYQDGLWLLGRQ). The FYXDWWN motif motif lies at 379-385 (FYRDWWN). An acyl-CoA-binding residues include Asn391, Arg394, Asn397, His401, Tyr409, and Ser432. The chain crosses the membrane as a helical span at residues 420 to 444 (GRGAAMLGVFLVSALVHEYIFCFVL). The active site involves His436. Residues 445–450 (GFFYPV) are Lumenal-facing. The helical transmembrane segment at 451–466 (MLILFLVVGGLLNFTM) threads the bilayer. The Cytoplasmic portion of the chain corresponds to 467–472 (NDRHTG). Residues 473–504 (PAWNILMWTFLFLGQGIQVSLYCQEWYARRHC) traverse the membrane as a helical segment. Topologically, residues 505 to 524 (PLPQPTFWELVTPRSWSCHP) are lumenal.

This sequence belongs to the membrane-bound acyltransferase family. Sterol o-acyltransferase subfamily. As to quaternary structure, may form homo- or heterodimers. Interacts with INSIG1; the interaction is direct and promotes association with AMFR/gp78. Polyubiquitinated by AMFR/gp78 at Cys-279, leading to its degradation when the lipid levels are low. Association with AMFR/gp78 is mediated via interaction with INSIG1. High concentration of cholesterol and fatty acid results in Cys-279 oxidation, preventing ubiquitination at the same site, resulting in protein stabilization. In terms of processing, oxidized at Cys-279: high concentration of cholesterol and fatty acid induce reactive oxygen species, which oxidizes Cys-279, preventing ubiquitination at the same site, and resulting in protein stabilization.

Its subcellular location is the endoplasmic reticulum membrane. It carries out the reaction a sterol + a long-chain fatty acyl-CoA = a long-chain 3-hydroxysterol ester + CoA. The catalysed reaction is cholesterol + an acyl-CoA = a cholesterol ester + CoA. The enzyme catalyses cholesterol + (9Z)-octadecenoyl-CoA = cholesteryl (9Z-octadecenoate) + CoA. It catalyses the reaction (5Z,8Z,11Z,14Z,17Z)-eicosapentaenoyl-CoA + cholesterol = (5Z,8Z,11Z,14Z,17Z-eicosapentaenoyl)-cholesterol + CoA. It carries out the reaction (9Z,12Z,15Z)-octadecatrienoyl-CoA + cholesterol = (9Z,12Z,15Z-octadecatrienoyl)-cholesterol + CoA. The catalysed reaction is (5Z,8Z,11Z,14Z)-eicosatetraenoyl-CoA + cholesterol = cholesteryl (5Z,8Z,11Z,14Z)-eicosatetraenoate + CoA. Functionally, catalyzes the formation of fatty acid-cholesterol esters, which are less soluble in membranes than cholesterol. Plays a role in lipoprotein assembly and dietary cholesterol absorption. Utilizes oleoyl-CoA ((9Z)-octadecenoyl-CoA) and linolenoyl-CoA ((9Z,12Z,15Z)-octadecatrienoyl-CoA) as substrates. May provide cholesteryl esters for lipoprotein secretion from hepatocytes and intestinal mucosa. The chain is Sterol O-acyltransferase 2 from Rattus norvegicus (Rat).